Consider the following 334-residue polypeptide: L-lactate dehydrogenase B chain (334 aa).

Residue alanine 2 is modified to N-acetylalanine. At lysine 7 the chain carries N6-acetyllysine. A Phosphoserine modification is found at serine 44. NAD(+)-binding positions include 53 to 58 and arginine 100; that span reads DVLEDK. At lysine 58 the chain carries N6-acetyllysine. Arginine 107 contributes to the substrate binding site. Residue lysine 119 is modified to N6-acetyllysine. Residue asparagine 139 participates in NAD(+) binding. Residues asparagine 139 and arginine 170 each contribute to the substrate site. Histidine 194 serves as the catalytic Proton acceptor. The residue at position 240 (tyrosine 240) is a Phosphotyrosine. Threonine 249 is a substrate binding site. N6-acetyllysine is present on lysine 329.

The protein belongs to the LDH/MDH superfamily. LDH family. In terms of assembly, homotetramer. Interacts with PTEN upstream reading frame protein MP31; the interaction leads to inhibition of mitochondrial lactate dehydrogenase activity, preventing conversion of lactate to pyruvate in mitochondria.

The protein localises to the cytoplasm. It is found in the mitochondrion inner membrane. The catalysed reaction is (S)-lactate + NAD(+) = pyruvate + NADH + H(+). It participates in fermentation; pyruvate fermentation to lactate; (S)-lactate from pyruvate: step 1/1. Interconverts simultaneously and stereospecifically pyruvate and lactate with concomitant interconversion of NADH and NAD(+). The protein is L-lactate dehydrogenase B chain (LDHB) of Bos taurus (Bovine).